Reading from the N-terminus, the 291-residue chain is Feruloyl esterase B (291 aa).

The signal sequence occupies residues 1-18; sequence MLVRSFLGFAVLAATCLA. The N-linked (GlcNAc...) asparagine glycan is linked to asparagine 117. Serine 136 acts as the Charge relay system in catalysis. Residue asparagine 179 is glycosylated (N-linked (GlcNAc...) asparagine).

The protein belongs to the carbohydrate esterase 1 (CE1) family. Feruloyl esterase type B subfamily.

Its subcellular location is the secreted. The enzyme catalyses feruloyl-polysaccharide + H2O = ferulate + polysaccharide.. In terms of biological role, feruloyl esterase which acts in synergy with xylanases in degradation of plant cell walls. Hydrolyzes the ester linkage of hydroxycinnamic acids (ferulic acid (FA) and p-coumaric acid) and diferulates present in plant cell walls. Is active on substrates containing ferulic acid ester linked to the C-5 and C-2 linkages of arabinofuranose, while it was found capable of de-esterifying acetylated glucuronoxylans. Efficiently releases ferulic acid (FA) from destarched wheat bran when incubated with an M3 xylanase. In Thermothelomyces thermophilus (strain ATCC 42464 / BCRC 31852 / DSM 1799) (Sporotrichum thermophile), this protein is Feruloyl esterase B (Fae1a).